A 326-amino-acid polypeptide reads, in one-letter code: Membrane-associated kinase regulator 5 (326 aa).

2 disordered regions span residues 188-239 (TKKQ…GMSP) and 267-326 (GSRE…KISD). Composition is skewed to low complexity over residues 190–202 (KQSS…PTSS) and 270–305 (ESSL…SSDS).

As to expression, expressed in roots.

It is found in the cell membrane. The protein resides in the cytoplasm. It localises to the cytosol. In terms of biological role, positive effector of CLE45 peptide signaling. Post-transcriptionally regulated amplifier of the CLE45 peptide signal that acts downstream of BAM3 in the regulation of the transition of root protophloem cells from proliferation to differentiation; thus preventing primary root elongation but stimulating lateral roots development. The polypeptide is Membrane-associated kinase regulator 5 (Arabidopsis thaliana (Mouse-ear cress)).